The following is a 464-amino-acid chain: Keratin, type I cytoskeletal 28 (464 aa).

The tract at residues 1 to 85 is head; it reads MSLQFSNGSR…GSEGGLLSGN (85 aa). Positions 86–121 are coil 1A; sequence EKVTMQNLNDRLASYLDNVRALEEANAELERKIKGW. Positions 86 to 401 constitute an IF rod domain; sequence EKVTMQNLND…RLIDGDGNSC (316 aa). Residues 122–143 are linker 1; the sequence is YEKYGPGSCRGLDHDYSRYHLT. The segment at 144 to 235 is coil 1B; that stretch reads IEDLKNKIIS…KNHEEEMKAL (92 aa). The linker 12 stretch occupies residues 236-258; sequence QCAAGGNVNVEMNAAPGVDLAVL. Positions 259 to 397 are coil 2; the sequence is LNNMRAEYEA…ETYCRLIDGD (139 aa). Residues 398 to 464 form a tail region; it reads GNSCSKSKGF…NGKTEQRVPF (67 aa). Residues 443-464 are disordered; the sequence is IHSIEEKTSKMTNGKTEQRVPF.

The protein belongs to the intermediate filament family. As to quaternary structure, heterotetramer of two type I and two type II keratins. In terms of tissue distribution, strongly expressed in skin and scalp, and weak expression observed in thymus. In the hair follicle, expressed in Henle layer, Huxley layer and in the irs cuticle. Expression extends from the bulb region up to the point of differentiation into the three layers. Also present in the medulla of beard hair (at protein level).

It is found in the cytoplasm. Essential for the proper assembly of types I and II keratin protein complexes and the formation of keratin intermediate filaments in the inner root sheath (irs). The protein is Keratin, type I cytoskeletal 28 of Homo sapiens (Human).